The primary structure comprises 707 residues: Keratin, type II cytoskeletal 2 epidermal (707 aa).

The interval 1 to 20 (MSCQISCRSRRGGGGGGGGG) is disordered. The segment at 1–198 (MSCQISCRSR…DPEIQNVKSQ (198 aa)) is head. At Arg-22 the chain carries Asymmetric dimethylarginine. A phosphoserine mark is found at Ser-25 and Ser-28. The span at 29 to 38 (AVVSGGSRRS) shows a compositional bias: low complexity. Residues 29–59 (AVVSGGSRRSNTSFSCISRHGGGRGGSGGGG) form a disordered region. At Arg-52 the chain carries Omega-N-methylarginine. Ser-64 bears the Phosphoserine mark. The interval 199–234 (EREQIKTLNNKFASFIDKVRFLEQQNQVLRTKWELL) is coil 1A. The IF rod domain occupies 199–512 (EREQIKTLNN…KLLEGEECRM (314 aa)). The linker 1 stretch occupies residues 235–253 (QQLDVGSRTTNLDPIFQAY). Residues 254 to 345 (IGMLKKQVDR…TLYDAELSQL (92 aa)) are coil 1B. The tract at residues 346-369 (QQDVTDTNVILSMDNNRNLDLDSI) is linker 12. A coil 2 region spans residues 370 to 508 (IAEVQNQYEM…ATYRKLLEGE (139 aa)). Positions 509-707 (ECRMSGDFSD…CGSGVTFSFR (199 aa)) are tail. The disordered stretch occupies residues 531–707 (SSVASKTGFG…CGSGVTFSFR (177 aa)). The span at 539–700 (FGSGGQSSGG…GSGSGEGCGS (162 aa)) shows a compositional bias: gly residues. Omega-N-methylarginine occurs at positions 555, 593, 607, and 675.

It belongs to the intermediate filament family. As to quaternary structure, heterotetramer of two type I and two type II keratins. Associates with KRT10. Expressed predominantly in the suprabasal layers of the plantar epidermis outside of the footpads (at protein level). Expressed in the suprabasal layers of the interfollicular epidermis of the ear, in the interscale regions distant from the hair follicles in the tail, and in the soles of the footpads (at protein level). Expressed mainly in the middle spinous and granular cells of the epidermis of adult tail, nipple and footsole skin. Also found in ear.

The protein resides in the cytoplasm. In terms of biological role, probably contributes to terminal cornification. Associated with keratinocyte activation, proliferation and keratinization. Required for maintenance of corneocytes and keratin filaments in suprabasal keratinocytes in the epidermis of the ear, potentially via moderation of expression and localization of keratins and their partner proteins. Plays a role in the establishment of the epidermal barrier on plantar skin. This Mus musculus (Mouse) protein is Keratin, type II cytoskeletal 2 epidermal.